Reading from the N-terminus, the 59-residue chain is Large ribosomal subunit protein bL32 (59 aa).

Residues 1–16 (MAVPKRKTSPSRRGMR) are compositionally biased toward basic residues. The interval 1–59 (MAVPKRKTSPSRRGMRRSADALKAPTYVEDKNSGELRRPHHIDLKSGMYRGRQVLEPKE) is disordered. The span at 28-44 (VEDKNSGELRRPHHIDL) shows a compositional bias: basic and acidic residues.

The protein belongs to the bacterial ribosomal protein bL32 family.

This Brucella abortus (strain S19) protein is Large ribosomal subunit protein bL32.